We begin with the raw amino-acid sequence, 611 residues long: ANK repeat-containing protein nipk-1 (611 aa).

A coiled-coil region spans residues 91-149 (NSKSKKKTENQETKEKDEEAEEKKDGPPKDDKELKMKKEKEQEDENAELDEQKKDGDLL). Disordered stretches follow at residues 92–167 (SKSK…SHPY), 212–255 (ISAS…DTSR), and 280–333 (TKEE…LSPR). Over residues 97–131 (KTENQETKEKDEEAEEKKDGPPKDDKELKMKKEKE) the composition is skewed to basic and acidic residues. 3 stretches are compositionally biased toward polar residues: residues 212–223 (ISASTTPDTVLS), 239–255 (ESLQ…DTSR), and 315–333 (GTCS…LSPR). ANK repeat units follow at residues 375–405 (DGDT…TMNE), 417–446 (FGET…SPNS), 452–482 (VGDS…RVNE), 486–527 (DGQT…DPTI), and 532–561 (TGKT…EDTF).

This sequence belongs to the iASPP family. As to expression, expressed in the nervous system.

Functionally, acts downstream of the receptor complex composed of ilcr-1 and ilcr-2, which is a signaling complex that modulates neuronal activity and animal behavior in response to sensory neuron input. Mediates signaling of the complex. This chain is ANK repeat-containing protein nipk-1, found in Caenorhabditis elegans.